A 147-amino-acid polypeptide reads, in one-letter code: Urease accessory protein UreE (147 aa).

Belongs to the UreE family.

It localises to the cytoplasm. Involved in urease metallocenter assembly. Binds nickel. Probably functions as a nickel donor during metallocenter assembly. In Nostoc sp. (strain PCC 7120 / SAG 25.82 / UTEX 2576), this protein is Urease accessory protein UreE.